A 584-amino-acid polypeptide reads, in one-letter code: Probable pectinesterase/pectinesterase inhibitor (584 aa).

An N-terminal signal peptide occupies residues 1-22; that stretch reads MAVGKIVISVASMLLVVGVAIG. A pectinesterase inhibitor region spans residues 40-191; the sequence is NSHQKAVESL…KILSSNAIDI (152 aa). N-linked (GlcNAc...) asparagine glycans are attached at residues asparagine 91 and asparagine 105. The segment at 246–267 is disordered; sequence AQAGRPGAPADEGIGEGGGGGG. The interval 272 to 571 is pectinesterase; the sequence is THVVAKDGSG…TVANWLTPAN (300 aa). Residues threonine 349 and glutamine 379 each coordinate substrate. Aspartate 402 serves as the catalytic Proton donor; for pectinesterase activity. Catalysis depends on aspartate 423, which acts as the Nucleophile; for pectinesterase activity. Residues arginine 492 and tryptophan 494 each coordinate substrate.

The protein in the N-terminal section; belongs to the PMEI family. In the C-terminal section; belongs to the pectinesterase family. Pollen, and at much lower levels in pistils and petals.

The protein localises to the secreted. It localises to the cell wall. The enzyme catalyses [(1-&gt;4)-alpha-D-galacturonosyl methyl ester](n) + n H2O = [(1-&gt;4)-alpha-D-galacturonosyl](n) + n methanol + n H(+). It participates in glycan metabolism; pectin degradation; 2-dehydro-3-deoxy-D-gluconate from pectin: step 1/5. In terms of biological role, acts in the modification of cell walls via demethylesterification of cell wall pectin. This chain is Probable pectinesterase/pectinesterase inhibitor (BP19), found in Brassica napus (Rape).